The sequence spans 359 residues: MAKLPVEKMRELERRFGEIEARMSAGPAADVYVKLASEYSELQPVVTKIRAYEKAIAELADLETLLEDKSVDREMRDLAELELPEVKEQIEALEQEMQILLLPKDAADEKSAILEIRAGTGGSEAALFAGDLFRMYERFSAEKGWKVEVLSASEGEAGGYKEIIATITGRGVFAKLKFESGVHRVQRVPETEAGGRIHTSAATVAVLPEAEEIDIEIRPEDIRIDTMRSSGAGGQHVNTTDSAVRITHLPSGIVVTSSEKSQHQNRAKAMQVLRSRLYDAERQRADSERSADRKSQVGSGDRSERIRTYNFPQGRITDHRINLTLYKLDRMMEGEIEEVVDALMADYQASQLAQLGEQQ.

Gln235 carries the N5-methylglutamine modification. The segment at 280–306 (AERQRADSERSADRKSQVGSGDRSERI) is disordered.

Belongs to the prokaryotic/mitochondrial release factor family. Methylated by PrmC. Methylation increases the termination efficiency of RF1.

It localises to the cytoplasm. In terms of biological role, peptide chain release factor 1 directs the termination of translation in response to the peptide chain termination codons UAG and UAA. This chain is Peptide chain release factor 1, found in Rhizobium leguminosarum bv. trifolii (strain WSM2304).